We begin with the raw amino-acid sequence, 476 residues long: ATP synthase subunit beta, chloroplastic (476 aa).

Position 156–163 (156–163 (GGAGVGKT)) interacts with ATP.

It belongs to the ATPase alpha/beta chains family. F-type ATPases have 2 components, CF(1) - the catalytic core - and CF(0) - the membrane proton channel. CF(1) has five subunits: alpha(3), beta(3), gamma(1), delta(1), epsilon(1). CF(0) has four main subunits: a(1), b(1), b'(1) and c(9-12).

The protein resides in the plastid. Its subcellular location is the chloroplast thylakoid membrane. It carries out the reaction ATP + H2O + 4 H(+)(in) = ADP + phosphate + 5 H(+)(out). In terms of biological role, produces ATP from ADP in the presence of a proton gradient across the membrane. The catalytic sites are hosted primarily by the beta subunits. The polypeptide is ATP synthase subunit beta, chloroplastic (Fucus vesiculosus (Bladder wrack)).